Consider the following 70-residue polypeptide: Putative defensin-like protein 73 (70 aa).

The signal sequence occupies residues 1 to 29 (MNCKIEFMSFLVMTSIVILFLFVSGKVEA). Disulfide bonds link cysteine 33/cysteine 68, cysteine 37/cysteine 57, cysteine 43/cysteine 66, and cysteine 47/cysteine 67.

Belongs to the DEFL family.

The protein resides in the secreted. This Arabidopsis thaliana (Mouse-ear cress) protein is Putative defensin-like protein 73 (LCR44).